Here is a 280-residue protein sequence, read N- to C-terminus: MAIRKYKPTSPGRRGASVSDFSEVTRSTPEKSLVRPLHGHGGRNAHGRITTRHKGGGHKRAYRVIDFRRNDKDGVNAKVAHIEYDPNRTANIALLHFLDGEKRYIIAPQGLSQGDVVESGPNADIKPGNNLPLRNIPAGTVIHAVELRPGGGAKLARSAGSSIQLLGKEGSYASLRMPSGEIRRVDVRCRATVGEVGNAEQANINWGKAGRMRWKGKRPSVRGVVMNPVDHPHGGGEGKTSGGRHPVSPWGKPEGRTRHPNKASNKLIVRRRRTGKKHGR.

Disordered stretches follow at residues 1-58 (MAIR…GGGH) and 226-280 (MNPV…KHGR). Composition is skewed to basic residues over residues 37 to 58 (LHGHGGRNAHGRITTRHKGGGH) and 268 to 280 (IVRRRRTGKKHGR).

This sequence belongs to the universal ribosomal protein uL2 family. In terms of assembly, part of the 50S ribosomal subunit. Forms a bridge to the 30S subunit in the 70S ribosome.

Functionally, one of the primary rRNA binding proteins. Required for association of the 30S and 50S subunits to form the 70S ribosome, for tRNA binding and peptide bond formation. It has been suggested to have peptidyltransferase activity; this is somewhat controversial. Makes several contacts with the 16S rRNA in the 70S ribosome. The polypeptide is Large ribosomal subunit protein uL2 (Mycobacterium avium (strain 104)).